The primary structure comprises 427 residues: 3-phosphoshikimate 1-carboxyvinyltransferase (427 aa).

3-phosphoshikimate-binding residues include Lys-22, Ser-23, and Arg-27. Residue Lys-22 coordinates phosphoenolpyruvate. Residues Gly-96 and Arg-124 each contribute to the phosphoenolpyruvate site. Residues Ser-169, Ser-170, Gln-171, Ser-197, Asp-313, Asn-336, and Lys-340 each contribute to the 3-phosphoshikimate site. Gln-171 provides a ligand contact to phosphoenolpyruvate. Asp-313 acts as the Proton acceptor in catalysis. Residues Arg-344, Arg-386, and Lys-411 each coordinate phosphoenolpyruvate.

It belongs to the EPSP synthase family. As to quaternary structure, monomer.

The protein localises to the cytoplasm. The enzyme catalyses 3-phosphoshikimate + phosphoenolpyruvate = 5-O-(1-carboxyvinyl)-3-phosphoshikimate + phosphate. The protein operates within metabolic intermediate biosynthesis; chorismate biosynthesis; chorismate from D-erythrose 4-phosphate and phosphoenolpyruvate: step 6/7. Functionally, catalyzes the transfer of the enolpyruvyl moiety of phosphoenolpyruvate (PEP) to the 5-hydroxyl of shikimate-3-phosphate (S3P) to produce enolpyruvyl shikimate-3-phosphate and inorganic phosphate. The sequence is that of 3-phosphoshikimate 1-carboxyvinyltransferase from Salmonella schwarzengrund (strain CVM19633).